The following is a 193-amino-acid chain: Orotate phosphoribosyltransferase (193 aa).

A 5-phospho-alpha-D-ribose 1-diphosphate-binding site is contributed by Glu-116–Ser-124. Positions 120 and 148 each coordinate orotate.

This sequence belongs to the purine/pyrimidine phosphoribosyltransferase family. PyrE subfamily. As to quaternary structure, homodimer. It depends on Mg(2+) as a cofactor.

The enzyme catalyses orotidine 5'-phosphate + diphosphate = orotate + 5-phospho-alpha-D-ribose 1-diphosphate. It participates in pyrimidine metabolism; UMP biosynthesis via de novo pathway; UMP from orotate: step 1/2. Catalyzes the transfer of a ribosyl phosphate group from 5-phosphoribose 1-diphosphate to orotate, leading to the formation of orotidine monophosphate (OMP). This is Orotate phosphoribosyltransferase from Clostridium tetani (strain Massachusetts / E88).